The primary structure comprises 105 residues: Insulin (105 aa).

The signal sequence occupies residues 1–22 (MAFWLQAASLLVLLALSPGVDA). 3 disulfide bridges follow: Cys-29-Cys-91, Cys-41-Cys-104, and Cys-90-Cys-95. Positions 53–82 (DVDPLIGFLSPKSAKENEEYPFKDQTEMMV) are cleaved as a propeptide — c peptide.

Belongs to the insulin family. In terms of assembly, heterodimer of a B chain and an A chain linked by two disulfide bonds.

Its subcellular location is the secreted. Insulin decreases blood glucose concentration. It increases cell permeability to monosaccharides, amino acids and fatty acids. It accelerates glycolysis, the pentose phosphate cycle, and glycogen synthesis in liver. This is Insulin (ins) from Oncorhynchus keta (Chum salmon).